A 41-amino-acid chain; its full sequence is Disintegrin viperistatin (41 aa).

4 disulfide bridges follow: Cys1–Cys10, Cys6–Cys29, Cys7–Cys34, and Cys19–Cys36. The Disintegrin domain maps to 1-41; it reads CTTGPCCRQCKLKPAGTTCWKTSRTSHYCTGKSCDCPVYQG. The short motif at 21 to 23 is the Cell attachment site; atypical (KTS) element; it reads KTS.

Monomer. Expressed by the venom gland.

It is found in the secreted. Its function is as follows. Potent and highly selective inhibitor of alpha-1/beta-1 (ITGA1/ITGB1) integrin binding to collagen I and IV. Is about 25-fold more potent than obtustatin inhibiting the binding of this integrin to collagen IV. The polypeptide is Disintegrin viperistatin (Daboia palaestinae (Palestine viper)).